The following is a 495-amino-acid chain: Cytochrome P450 710A1 (495 aa).

Residues 5–25 form a helical membrane-spanning segment; it reads VSIFASLAPYLISAFLLFLLV. C434 is a heme binding site.

It belongs to the cytochrome P450 family. Heme serves as cofactor. In terms of tissue distribution, expressed in the vascular tissues of roots, shoots and leaves. Expressed in root tips and sepals. Very low expression in stems and siliques.

Its subcellular location is the membrane. It carries out the reaction 5-dehydroepisterol + NADPH + O2 + H(+) = ergosta-5,7,22,24(28)-tetraen-3beta-ol + NADP(+) + 2 H2O. It functions in the pathway steroid biosynthesis; sterol biosynthesis. In terms of biological role, required to form the C-22 double bond in the sterol side chain. Possesses in vitro C-22 desaturase activity toward beta-sitosterol and produces stigmasterol. No activity with campesterol. The polypeptide is Cytochrome P450 710A1 (Arabidopsis thaliana (Mouse-ear cress)).